The following is a 305-amino-acid chain: GMP synthase [glutamine-hydrolyzing] subunit B (305 aa).

One can recognise a GMPS ATP-PPase domain in the interval 2–185 (VEPTAFIDEK…LDLESIIAER (184 aa)). An ATP-binding site is contributed by 29–35 (SGGVDSS).

Heterodimer composed of a glutamine amidotransferase subunit (A) and a GMP-binding subunit (B).

The enzyme catalyses XMP + L-glutamine + ATP + H2O = GMP + L-glutamate + AMP + diphosphate + 2 H(+). It functions in the pathway purine metabolism; GMP biosynthesis; GMP from XMP (L-Gln route): step 1/1. Its function is as follows. Catalyzes the synthesis of GMP from XMP. This is GMP synthase [glutamine-hydrolyzing] subunit B from Natronomonas pharaonis (strain ATCC 35678 / DSM 2160 / CIP 103997 / JCM 8858 / NBRC 14720 / NCIMB 2260 / Gabara) (Halobacterium pharaonis).